The primary structure comprises 645 residues: Transcription factor AN6788 (645 aa).

The disordered stretch occupies residues 1–21; that stretch reads MPQKAQPQPRESPFKPARQQP. The segment at residues 25–52 is a DNA-binding region (zn(2)-C6 fungal-type); that stretch reads CEECRKRKARCDRAKPQCGSCMMTGRVC. Residues 113 to 131 are compositionally biased toward basic and acidic residues; that stretch reads PDFEPNSHPRHSQSHDRRQ. The tract at residues 113-170 is disordered; the sequence is PDFEPNSHPRHSQSHDRRQQSGPDSSPDTQHELPFLQSPPAARDADSAERALLPSPVS.

The protein resides in the nucleus. Transcription factors AN6788 and AN6790 act in tandem to regulate the expression of the non-reducing polyketide synthase pkfA from the aspernidine A biosynthesis cluster. They do not control the expression of the other genes involved in aspernidine A biosynthesis, nor do they regulate the expression of the highly reducing polyketide synthase AN6791 and the esterase AN6793 with which they are predicted to form a secondary metabolite biosynthesis cluster. This is Transcription factor AN6788 from Emericella nidulans (strain FGSC A4 / ATCC 38163 / CBS 112.46 / NRRL 194 / M139) (Aspergillus nidulans).